Reading from the N-terminus, the 554-residue chain is Glutamine--tRNA ligase (554 aa).

Residues Pro34–His44 carry the 'HIGH' region motif. ATP-binding positions include Glu35–Asn37 and His41–Ser47. L-glutamine is bound by residues Asp67 and Tyr212. Residues Thr231, Arg261–Leu262, and Met269–Lys271 contribute to the ATP site. The 'KMSKS' region signature appears at Val268–Arg272. The interval Thr317–Glu324 is interaction with tRNA.

It belongs to the class-I aminoacyl-tRNA synthetase family. As to quaternary structure, monomer.

It localises to the cytoplasm. The catalysed reaction is tRNA(Gln) + L-glutamine + ATP = L-glutaminyl-tRNA(Gln) + AMP + diphosphate. The protein is Glutamine--tRNA ligase of Escherichia coli O157:H7.